Consider the following 217-residue polypeptide: Proteasome subunit beta type-9 (217 aa).

Residues methionine 1–glycine 18 constitute a propeptide, removed in mature form. Threonine 19 (nucleophile) is an active-site residue.

It belongs to the peptidase T1B family. The 26S proteasome consists of a 20S proteasome core and two 19S regulatory subunits. The 20S proteasome core is composed of 28 subunits that are arranged in four stacked rings, resulting in a barrel-shaped structure. The two end rings are each formed by seven alpha subunits, and the two central rings are each formed by seven beta subunits. The catalytic chamber with the active sites is on the inside of the barrel. Component of the immunoproteasome, where it displaces the equivalent housekeeping subunit PSMB6. Autocleaved. The resulting N-terminal Thr residue of the mature subunit is responsible for the nucleophile proteolytic activity.

It is found in the cytoplasm. It localises to the nucleus. The catalysed reaction is Cleavage of peptide bonds with very broad specificity.. The proteasome is a multicatalytic proteinase complex which is characterized by its ability to cleave peptides with Arg, Phe, Tyr, Leu, and Glu adjacent to the leaving group at neutral or slightly basic pH. The proteasome has an ATP-dependent proteolytic activity. This subunit is involved in antigen processing to generate class I binding peptides. This Oncorhynchus mykiss (Rainbow trout) protein is Proteasome subunit beta type-9 (psmb9).